A 125-amino-acid chain; its full sequence is Ribosome-binding factor A (125 aa).

Belongs to the RbfA family. Monomer. Binds 30S ribosomal subunits, but not 50S ribosomal subunits or 70S ribosomes.

The protein resides in the cytoplasm. One of several proteins that assist in the late maturation steps of the functional core of the 30S ribosomal subunit. Associates with free 30S ribosomal subunits (but not with 30S subunits that are part of 70S ribosomes or polysomes). Required for efficient processing of 16S rRNA. May interact with the 5'-terminal helix region of 16S rRNA. The sequence is that of Ribosome-binding factor A from Fervidobacterium nodosum (strain ATCC 35602 / DSM 5306 / Rt17-B1).